The sequence spans 382 residues: UDP-N-acetylglucosamine--N-acetylmuramyl-(pentapeptide) pyrophosphoryl-undecaprenol N-acetylglucosamine transferase (382 aa).

UDP-N-acetyl-alpha-D-glucosamine contacts are provided by residues 17 to 19 (TAG), Asn-137, Arg-179, Ser-213, and Gln-308.

It belongs to the glycosyltransferase 28 family. MurG subfamily.

Its subcellular location is the cell membrane. The enzyme catalyses di-trans,octa-cis-undecaprenyl diphospho-N-acetyl-alpha-D-muramoyl-L-alanyl-D-glutamyl-meso-2,6-diaminopimeloyl-D-alanyl-D-alanine + UDP-N-acetyl-alpha-D-glucosamine = di-trans,octa-cis-undecaprenyl diphospho-[N-acetyl-alpha-D-glucosaminyl-(1-&gt;4)]-N-acetyl-alpha-D-muramoyl-L-alanyl-D-glutamyl-meso-2,6-diaminopimeloyl-D-alanyl-D-alanine + UDP + H(+). Its pathway is cell wall biogenesis; peptidoglycan biosynthesis. Its function is as follows. Cell wall formation. Catalyzes the transfer of a GlcNAc subunit on undecaprenyl-pyrophosphoryl-MurNAc-pentapeptide (lipid intermediate I) to form undecaprenyl-pyrophosphoryl-MurNAc-(pentapeptide)GlcNAc (lipid intermediate II). This chain is UDP-N-acetylglucosamine--N-acetylmuramyl-(pentapeptide) pyrophosphoryl-undecaprenol N-acetylglucosamine transferase, found in Rhodococcus jostii (strain RHA1).